Reading from the N-terminus, the 1406-residue chain is Sterol 3-beta-glucosyltransferase (1406 aa).

The disordered stretch occupies residues 83–231 (ARFDESSDSD…IHSSHESSTS (149 aa)). Polar residues predominate over residues 110 to 128 (GSSNPVNSQTEQRSGSQTS). A compositionally biased stretch (low complexity) spans 209–231 (SAGRSQNSSQESSIHSSHESSTS). Residues 236–286 (RLMEMFDFNKPEKVLVEYACSLLQSMLLQGYMYVTEGHICFYAYLPRKSTV) form the GRAM 1 domain. The PH domain maps to 286-385 (VAIKSGYLHK…WVKALQKVIF (100 aa)). 2 disordered regions span residues 457–558 (ASGH…AESA) and 576–622 (LDKR…DGKP). A compositionally biased stretch (basic and acidic residues) spans 468–478 (HADRSPRSDRT). Polar residues-rich tracts occupy residues 490–499 (GTSQPGNGSA) and 531–548 (SESI…SAVW). The segment covering 576 to 587 (LDKRACSDERSG) has biased composition (basic and acidic residues). The GRAM 2 domain maps to 730–796 (DRFRAHFALP…KDVENVEKEK (67 aa)). Ser917, Arg918, Asp920, Ala1220, His1222, His1235, Gly1239, Thr1240, Asp1259, and Gln1260 together coordinate UDP-alpha-D-glucose. Positions 1334–1406 (QRSIASSTPF…LTNSIHGAGR (73 aa)) are disordered. Residues 1336–1349 (SIASSTPFSPTPSA) show a composition bias toward low complexity. Acidic residues predominate over residues 1355–1375 (QGDDDVEDSEEWTFVGDDNEM). Residues 1376–1387 (DMSRRMRDRAIS) show a composition bias toward basic and acidic residues. Polar residues predominate over residues 1397-1406 (LTNSIHGAGR).

It belongs to the glycosyltransferase 28 family.

Its subcellular location is the cytoplasm. It localises to the preautophagosomal structure membrane. It carries out the reaction a sterol + UDP-alpha-D-glucose = a sterol 3-beta-D-glucoside + UDP + H(+). The catalysed reaction is ergosterol + UDP-alpha-D-glucose = ergosteryl 3-beta-D-glucoside + UDP + H(+). Sterol glycosyltransferase responsible for the glycosylation of ergosterol to form ergosterol-glucoside. The polypeptide is Sterol 3-beta-glucosyltransferase (Aspergillus clavatus (strain ATCC 1007 / CBS 513.65 / DSM 816 / NCTC 3887 / NRRL 1 / QM 1276 / 107)).